The chain runs to 42 residues: Potassium channel toxin gamma-KTx 1.8 (42 aa).

Intrachain disulfides connect Cys-5/Cys-23, Cys-11/Cys-34, Cys-20/Cys-39, and Cys-24/Cys-41.

It belongs to the ergtoxin family. Gamma-KTx 1 subfamily. Expressed by the venom gland.

The protein resides in the secreted. In terms of biological role, blocks in a reversible manner human and rat Kv11.1/KCNH2/ERG1 potassium channels. Also completely and irreversibly blocks rat Kv11.2/KCNH6/ERG2 and human Kv11.3/KCNH7/ERG3 channels. Also weakly inhibits Kir2.1/KCNJ2 and Kv1.2/KCNA2 potassium channels. The polypeptide is Potassium channel toxin gamma-KTx 1.8 (Centruroides elegans (Bark scorpion)).